We begin with the raw amino-acid sequence, 689 residues long: Beta-galactosidase Pbg (689 aa).

Arg118 contributes to the substrate binding site. Position 122 (Cys122) interacts with Zn(2+). Asn156 provides a ligand contact to substrate. The active-site Proton donor is the Glu157. Zn(2+)-binding residues include Cys162, Cys164, and Cys167. Glu318 acts as the Nucleophile in catalysis. Substrate is bound by residues Trp326 and 366–369; that span reads EKFH.

This sequence belongs to the glycosyl hydrolase 42 family.

It carries out the reaction Hydrolysis of terminal non-reducing beta-D-galactose residues in beta-D-galactosides.. The chain is Beta-galactosidase Pbg from Clostridium perfringens (strain ATCC 13124 / DSM 756 / JCM 1290 / NCIMB 6125 / NCTC 8237 / Type A).